A 607-amino-acid chain; its full sequence is DNA mismatch repair protein MutL (607 aa).

It belongs to the DNA mismatch repair MutL/HexB family.

Functionally, this protein is involved in the repair of mismatches in DNA. It is required for dam-dependent methyl-directed DNA mismatch repair. May act as a 'molecular matchmaker', a protein that promotes the formation of a stable complex between two or more DNA-binding proteins in an ATP-dependent manner without itself being part of a final effector complex. In Anaeromyxobacter dehalogenans (strain 2CP-1 / ATCC BAA-258), this protein is DNA mismatch repair protein MutL.